We begin with the raw amino-acid sequence, 1040 residues long: MQVLPPGSTGGPSRLFILRPVATTLLMAAILLAGIIGYRFLPVAALPEVDYPTIQVVTLYPGASPDVMTSAVTAPLERQFGQMSGLKQMSSQSSGGASVVTLQFQLTLPLDVAEQEVQAAINAATNLLPSDLPNPPIYSKVNPADPPIMTLAVTSNSMPMTQVEDMVETRVAQKISQVSGVGLVTLAGGQRPAVRVKLNAQAVAALGLTSETVRTAITGANVNSAKGSLDGPERAVTLSANDQMQSADEYRRLIIAYQNGAPVRLGDVATVEQGAENSWLGAWANQAPAIVMNVQRQPGANIIATADSIRQMLPQLTESLPKSVKVTVLSDRTTNIRASVRDTQFELMLAIALVVMIIYLFLRNIPATIIPGVAVPLSLIGTFAVMVFLDFSINNLTLMALTIATGFVVDDAIVVIENISRYIEKGEKPLAAALKGAGEIGFTIISLTFSLIAVLIPLLFMGDIVGRLFREFAVTLAVAILISAVVSLTLTPMMCARMLSQQSLRKQNRFSRACERMFDRVIASYGRGLAKVLNHPWLTLSVAFATLLLSVMLWIVIPKGFFPVQDNGIIQGTLQAPQSSSYASMAQRQRQVAERILQDPAVQSLTTFVGVDGANPTLNSARLQINLKPLDARDDRVQQVISRLQTAVATIPGVELYLQPTQDLTIDTQVSRTQYQFTLQATTLDALSHWVPKLQNALQSLPQLSEVSSDWQDRGLAAWVNVDRDSASRLGISMADVDNALYNAFGQRLISTIYTQANQYRVVLEHNTASMPGLAALETIRLTSRDGGTVPLSAIARIEQRFAPLSINHLDQFPVTTFSFNVPESYSLGDAVQAILDTEKTLALPADITTQFQGSTLAFQAALGSTVWLIVAAVVAMYIVLGVLYESFIHPITILSTLPTAGVGALLALIIAGSELDIIAIIGIILLIGIVKKNAIMMIDFALAAEREQGMSPRDAIFQACLLRFRPILMTTLAALLGALPLMLSTGVGTELRRPLGIAMVGGLLVSQVLTLFTTPVIYLLFDRLSLYVKSRFPRHKEEA.

11 helical membrane passes run 15-37 (LFILRPVATTLLMAAILLAGIIG), 345-362 (FELMLAIALVVMIIYLFL), 367-389 (ATIIPGVAVPLSLIGTFAVMVFL), 396-418 (LTLMALTIATGFVVDDAIVVIEN), 438-460 (GEIGFTIISLTFSLIAVLIPLLF), 472-494 (FAVTLAVAILISAVVSLTLTPMM), 535-557 (HPWLTLSVAFATLLLSVMLWIVI), 867-889 (VWLIVAAVVAMYIVLGVLYESFI), 909-931 (LIIAGSELDIIAIIGIILLIGIV), 968-990 (ILMTTLAALLGALPLMLSTGVGT), and 1000-1022 (MVGGLLVSQVLTLFTTPVIYLLF).

It belongs to the resistance-nodulation-cell division (RND) (TC 2.A.6) family. MdtB subfamily. Part of a tripartite efflux system composed of MdtA, MdtB and MdtC. MdtB forms a heteromultimer with MdtC.

The protein resides in the cell inner membrane. This chain is Multidrug resistance protein MdtB, found in Salmonella typhimurium (strain LT2 / SGSC1412 / ATCC 700720).